A 379-amino-acid polypeptide reads, in one-letter code: Flap endonuclease 1 (379 aa).

Residues 1 to 105 (MGVKGLNQLI…GELEKRLLRR (105 aa)) form an N-domain region. Position 34 (D34) interacts with Mg(2+). Residues R47 and R71 each contribute to the DNA site. Residues D87, E159, E161, D180, and D182 each contribute to the Mg(2+) site. An I-domain region spans residues 123–254 (DMVRYEKRTV…VTAFKLIKEH (132 aa)). A DNA-binding site is contributed by E159. DNA contacts are provided by G232 and D234. Residue D234 participates in Mg(2+) binding. The interaction with PCNA stretch occupies residues 341 to 349 (VQGRLDGFF). The segment at 344-379 (RLDGFFQSVPKPKDSADKKRKNDTKSAKSKKAKTRK) is disordered. Over residues 361-379 (KKRKNDTKSAKSKKAKTRK) the composition is skewed to basic residues.

It belongs to the XPG/RAD2 endonuclease family. FEN1 subfamily. Interacts with PCNA. Three molecules of FEN1 bind to one PCNA trimer with each molecule binding to one PCNA monomer. PCNA stimulates the nuclease activity without altering cleavage specificity. Requires Mg(2+) as cofactor. In terms of processing, phosphorylated. Phosphorylation upon DNA damage induces relocalization to the nuclear plasma.

The protein resides in the nucleus. It is found in the nucleolus. The protein localises to the nucleoplasm. Its subcellular location is the mitochondrion. Its function is as follows. Structure-specific nuclease with 5'-flap endonuclease and 5'-3' exonuclease activities involved in DNA replication and repair. During DNA replication, cleaves the 5'-overhanging flap structure that is generated by displacement synthesis when DNA polymerase encounters the 5'-end of a downstream Okazaki fragment. It enters the flap from the 5'-end and then tracks to cleave the flap base, leaving a nick for ligation. Also involved in the long patch base excision repair (LP-BER) pathway, by cleaving within the apurinic/apyrimidinic (AP) site-terminated flap. Acts as a genome stabilization factor that prevents flaps from equilibrating into structures that lead to duplications and deletions. Also possesses 5'-3' exonuclease activity on nicked or gapped double-stranded DNA, and exhibits RNase H activity. Also involved in replication and repair of rDNA and in repairing mitochondrial DNA. The sequence is that of Flap endonuclease 1 from Debaryomyces hansenii (strain ATCC 36239 / CBS 767 / BCRC 21394 / JCM 1990 / NBRC 0083 / IGC 2968) (Yeast).